Reading from the N-terminus, the 421-residue chain is UPF0415 protein C7orf25 (421 aa).

The protein belongs to the UPF0415 family.

In Homo sapiens (Human), this protein is UPF0415 protein C7orf25 (C7orf25).